We begin with the raw amino-acid sequence, 275 residues long: MACPGFLWALVISTCLEFSMAQTVTQSQPEMSVQEAETVTLSCTYDTSESDYYLFWYKQPPSRQMILVIRQEAYKQQNATENRFSVNFQKAAKSFSLKISDSQLGDAAMYFCAYRSAVNARLMFGDGTQLVVKPNIQNPDPAVYQLRDSKSSDKSVCLFTDFDSQTNVSQSKDSDVYITDKTVLDMRSMDFKSNSAVAWSNKSDFACANAFNNSIIPEDTFFPSPESSCDVKLVEKSFETDTNLNFQNLSVIGFRILLLKVAGFNLLMTLRLWSS.

A signal peptide spans 1–21 (MACPGFLWALVISTCLEFSMA). The 95-residue stretch at 22–116 (QTVTQSQPEM…AAMYFCAYRS (95 aa)) folds into the Ig-like V-type domain. A t cell receptor alpha variable 38-2DV8 region spans residues 22-116 (QTVTQSQPEM…AAMYFCAYRS (95 aa)). A disulfide bond links Cys-43 and Cys-112. Residues 47–53 (TSESDYY) are CDR1. The tract at residues 71 to 81 (QEAYKQQNATE) is CDR2. Asn-78 carries an N-linked (GlcNAc...) asparagine glycan. The tract at residues 112 to 124 (CAYRSAVNARLMF) is CDR3. The interval 119 to 134 (NARLMFGDGTQLVVKP) is t cell receptor alpha joining 31. Positions 136–275 (IQNPDPAVYQ…LLMTLRLWSS (140 aa)) are t cell receptor alpha constant. Residues 154–242 (KSVCLFTDFD…LVEKSFETDT (89 aa)) form the Ig-like C1-type domain. Residues Cys-157 and Cys-207 are joined by a disulfide bond. N-linked (GlcNAc...) asparagine glycosylation is found at Asn-167, Asn-201, Asn-212, and Asn-248. The connecting peptide stretch occupies residues 229 to 250 (CDVKLVEKSFETDTNLNFQNLS). A helical membrane pass occupies residues 251–273 (VIGFRILLLKVAGFNLLMTLRLW). Residues 274-275 (SS) are Cytoplasmic-facing.

As to quaternary structure, disulfide-linked heterodimer with TRBV25-1*01J2S3*01C2*01 beta chain. The alpha-beta TR associates with the transmembrane signaling CD3 coreceptor proteins to form the TR-CD3 (TCR). The assembly of alpha-beta TR heterodimers with CD3 occurs in the endoplasmic reticulum where a single alpha-beta TR heterodimer associates with one CD3D-CD3E heterodimer, one CD3G-CD3E heterodimer and one CD247 homodimer forming a stable octameric structure. CD3D-CD3E and CD3G-CD3E heterodimers preferentially associate with TR alpha and TR beta chains (via TM domain), respectively. The association of the CD247 homodimer is the last step of TCR assembly in the endoplasmic reticulum and is required for transport to the cell surface. Expressed in MR1-restricted CD8-positive T cells.

It is found in the cell membrane. Functionally, the alpha chain of TRAV38-2DV8*01J31*01C*01/TRBV25-1*01J2S3*01C2*01 alpha-beta T cell receptor (TR) clonotype that displays pan-cancer cell recognition via the invariant MR1 molecule. On CD8-positive T cell clone MC.7.G5, likely recognizes tumor-specific or -associated metabolite(s) essential for cancer cell survival, triggering killing of many cancer cell types including lung, melanoma, leukemia, colon, breast, prostate, bone and ovarian cancer cells. Mediates cancer cell cytotoxicity in an HLA-independent manner. Has no reactivity to healthy cells, even stressed or infected by bacteria. Antigen recognition initiates TR-CD3 clustering on the cell surface and intracellular activation of LCK that phosphorylates the ITAM motifs of CD3G, CD3D, CD3E and CD247 enabling the recruitment of ZAP70. In turn, ZAP70 phosphorylates LAT, which recruits numerous signaling molecules to form the LAT signalosome. The LAT signalosome propagates signal branching to three major signaling pathways, the calcium, the mitogen-activated protein kinase (MAPK) kinase and the nuclear factor NF-kappa-B (NF-kB) pathways, leading to the mobilization of transcription factors that are critical for gene expression and essential for T cell differentiation into effector/memory T cells. The sequence is that of T cell receptor alpha chain MC.7.G5 from Homo sapiens (Human).